A 184-amino-acid chain; its full sequence is Leucine-rich repeat-containing protein 20 (184 aa).

LRR repeat units lie at residues 51-72 (QIHLITLANNELKSLTSKFMTT), 75-96 (QLRELHLEGNFLHRLPSEVSAL), 98-120 (HLKAIDLSRNQFQDFPEQLTALP), 121-141 (ALETINLEENEIVDVPVEKLA), and 145-167 (ALRSINLRFNPLNAEVRVIAPPL). The residue at position 175 (Ser-175) is a Phosphoserine.

In Homo sapiens (Human), this protein is Leucine-rich repeat-containing protein 20 (LRRC20).